A 183-amino-acid polypeptide reads, in one-letter code: Ribosome rescue factor SmrB (183 aa).

Residues 98 to 173 (LDLHGLTQLQ…GDAALLVLIE (76 aa)) form the Smr domain.

This sequence belongs to the SmrB family. As to quaternary structure, associates with collided ribosomes, but not with correctly translating polysomes.

Its function is as follows. Acts as a ribosome collision sensor. Detects stalled/collided disomes (pairs of ribosomes where the leading ribosome is stalled and a second ribosome has collided with it) and endonucleolytically cleaves mRNA at the 5' boundary of the stalled ribosome. Stalled/collided disomes form a new interface (primarily via the 30S subunits) that binds SmrB. Cleaved mRNA becomes available for tmRNA ligation, leading to ribosomal subunit dissociation and rescue of stalled ribosomes. This Shigella dysenteriae serotype 1 (strain Sd197) protein is Ribosome rescue factor SmrB.